Here is a 552-residue protein sequence, read N- to C-terminus: Membrane protein insertase YidC (552 aa).

Residues 6-26 traverse the membrane as a helical segment; sequence NLLLAAIAAVILMLFIRWNHF. 2 stretches are compositionally biased toward polar residues: residues 32–41 and 60–70; these read QHQAGNTPAG and PTASDTPQATA. Positions 32–70 are disordered; sequence QHQAGNTPAGSSIAAIAPDSNGDIPSAVPTASDTPQATA. The next 4 membrane-spanning stretches (helical) occupy residues 365–387, 431–451, 472–492, and 508–528; these read WGLA…SAAS, FGGC…YWVL, MDPY…MQKL, and LPFV…LYWV.

It belongs to the OXA1/ALB3/YidC family. Type 1 subfamily. In terms of assembly, interacts with the Sec translocase complex via SecD. Specifically interacts with transmembrane segments of nascent integral membrane proteins during membrane integration.

It is found in the cell inner membrane. Functionally, required for the insertion and/or proper folding and/or complex formation of integral membrane proteins into the membrane. Involved in integration of membrane proteins that insert both dependently and independently of the Sec translocase complex, as well as at least some lipoproteins. Aids folding of multispanning membrane proteins. The protein is Membrane protein insertase YidC of Cellvibrio japonicus (strain Ueda107) (Pseudomonas fluorescens subsp. cellulosa).